Here is a 206-residue protein sequence, read N- to C-terminus: 3-isopropylmalate dehydratase small subunit (206 aa).

It belongs to the LeuD family. LeuD type 1 subfamily. In terms of assembly, heterodimer of LeuC and LeuD.

The catalysed reaction is (2R,3S)-3-isopropylmalate = (2S)-2-isopropylmalate. Its pathway is amino-acid biosynthesis; L-leucine biosynthesis; L-leucine from 3-methyl-2-oxobutanoate: step 2/4. Its function is as follows. Catalyzes the isomerization between 2-isopropylmalate and 3-isopropylmalate, via the formation of 2-isopropylmaleate. This is 3-isopropylmalate dehydratase small subunit from Leptospira borgpetersenii serovar Hardjo-bovis (strain L550).